We begin with the raw amino-acid sequence, 324 residues long: tRNA pseudouridine synthase B (324 aa).

Asp49 serves as the catalytic Nucleophile. A disordered region spans residues 87-107 (RSTDDLEGQPTKTSDKRPSRE).

This sequence belongs to the pseudouridine synthase TruB family. Type 1 subfamily.

It catalyses the reaction uridine(55) in tRNA = pseudouridine(55) in tRNA. Functionally, responsible for synthesis of pseudouridine from uracil-55 in the psi GC loop of transfer RNAs. This is tRNA pseudouridine synthase B from Brucella canis (strain ATCC 23365 / NCTC 10854 / RM-666).